A 371-amino-acid chain; its full sequence is Alanine dehydrogenase (371 aa).

Residues Arg-15 and Lys-75 each contribute to the substrate site. Residue His-96 is the Proton donor/acceptor of the active site. NAD(+) is bound by residues Ser-134, 178-179 (TA), Asp-198, Lys-203, Ser-220, 239-240 (VL), 267-270 (IAID), Arg-279, and 298-301 (VANM). The Proton donor/acceptor role is filled by Asp-270. 2 residues coordinate Mg(2+): Glu-323 and His-327.

It belongs to the AlaDH/PNT family. In terms of assembly, homohexamer. Trimer of dimers. Mg(2+) serves as cofactor.

The protein resides in the secreted. It carries out the reaction L-alanine + NAD(+) + H2O = pyruvate + NH4(+) + NADH + H(+). Its pathway is amino-acid degradation; L-alanine degradation via dehydrogenase pathway; NH(3) and pyruvate from L-alanine: step 1/1. Inhibited by CuSO(4) and ZnCl(2). In terms of biological role, catalyzes the reversible reductive amination of pyruvate to L-alanine. However, since the physiological environment of M.tuberculosis has a neutral pH, it can be assumed that the enzyme catalyzes exclusively the formation of L-alanine. May play a role in cell wall synthesis as L-alanine is an important constituent of the peptidoglycan layer. In Mycobacterium tuberculosis (strain ATCC 25618 / H37Rv), this protein is Alanine dehydrogenase (ald).